Reading from the N-terminus, the 206-residue chain is MLKRLESLLAQADMALTSAQKEKLLGYVALLHKWNKAYNLTSVRSPEQMLVRHIMDSIVVNPHLRGDRFIDVGTGPGLPGIPLAIVRPDAHFTLLDSLGKRICFLRQVQHELGLDNITAVQSRVESFAPPAGFDGVISRAFASLGDMLTWCAALPRKEEGRFYALKGQLSEEELNALPAGFRVESVIGLQVPCLEGERHIVVLAAN.

S-adenosyl-L-methionine contacts are provided by residues Gly-73, Leu-78, 124 to 125 (VE), and Arg-139.

This sequence belongs to the methyltransferase superfamily. RNA methyltransferase RsmG family.

The protein resides in the cytoplasm. It carries out the reaction guanosine(527) in 16S rRNA + S-adenosyl-L-methionine = N(7)-methylguanosine(527) in 16S rRNA + S-adenosyl-L-homocysteine. Its function is as follows. Specifically methylates the N7 position of guanine in position 527 of 16S rRNA. This is Ribosomal RNA small subunit methyltransferase G from Sodalis glossinidius (strain morsitans).